The chain runs to 699 residues: Sarcoplasmic reticulum histidine-rich calcium-binding protein (699 aa).

The N-terminal stretch at 1–28 (MGHHRPWLHASVLWAGVASLLLPPAMTQ) is a signal peptide. Positions 50-95 (SEEASAELRHHLHSPRDHPDENKDVSTENGHHFWSHPDREKEDEDV) are disordered. The span at 55 to 89 (AELRHHLHSPRDHPDENKDVSTENGHHFWSHPDRE) shows a compositional bias: basic and acidic residues. Thr-76 carries the post-translational modification Phosphothreonine; by FAM20C. Repeat copies occupy residues 106-121 (HRSQ…VSGE), 134-154 (HRGH…HLPS), 155-177 (HRSH…HHHI), 180-213 (HGHR…GHQA), 214-237 (HRHR…HGPS), 238-270 (HRHQ…RHQA), 271-294 (HRHQ…RDPS), 295-318 (HRHR…GHQA), 319-342 (HRHQ…HVPD), and 343-365 (HRHQ…WHQG). Residues 106 to 342 (HRSQDHKVGD…SGEHHHHVPD (237 aa)) are 6 X approximate tandem repeats. The 4 X tandem repeats, acidic stretch occupies residues 106-365 (HRSQDHKVGD…DVSTERWHQG (260 aa)). Ser-119 and Ser-145 each carry phosphoserine; by FAM20C. A disordered region spans residues 127–617 (HGGQARGHRG…EDTGPQDAQE (491 aa)). Basic residues-rich tracts occupy residues 148 to 158 (HRHHLPSHRSH) and 173 to 183 (HHHHILRHGHR). Residues 187-206 (GEDDEGEEEEEEEEEEEEAS) show a composition bias toward acidic residues. The span at 231-241 (HHHHGPSHRHQ) shows a compositional bias: basic residues. Residues 244–263 (EEDDDDDDDDDDDDDDDDVS) show a composition bias toward acidic residues. The span at 288–298 (HHHRDPSHRHR) shows a compositional bias: basic residues. The span at 302–311 (EDDNDDDDVS) shows a compositional bias: acidic residues. Residues 324-335 (HRKEEVEAVSGE) are compositionally biased toward basic and acidic residues. Ser-333 bears the Phosphoserine mark. Residues 336-347 (HHHHVPDHRHQG) are compositionally biased toward basic residues. Phosphoserine; by FAM20C occurs at positions 358 and 431. Basic and acidic residues-rich tracts occupy residues 444 to 463 (SHQD…EMSH) and 470 to 481 (VVKDRSHLRKDD). A Phosphoserine; by FAM20C modification is found at Ser-494. A compositionally biased stretch (basic and acidic residues) spans 504–515 (QGEKGTHHGSRD). Composition is skewed to acidic residues over residues 532–551 (QEEE…DEER) and 567–581 (SEEE…EEDE). Residue Ser-567 is modified to Phosphoserine; by FAM20C. The metal-binding stretch occupies residues 627-673 (CGYCSFCNRCTECESCHCDEENMGEHCDQCQHCQFCYLCPLVCETVC).

It belongs to the HRC family.

It localises to the sarcoplasmic reticulum lumen. Functionally, may play a role in the regulation of calcium sequestration or release in the SR of skeletal and cardiac muscle. This Homo sapiens (Human) protein is Sarcoplasmic reticulum histidine-rich calcium-binding protein (HRC).